The sequence spans 437 residues: MNNKTSNGDITNDEPTVGSKRSWTDVNYKFCEDKEKQVVEEIQTETSWADVDWDSVRESIAKSITEKETDIIGEEDKIHHEDNAMDYWDKFYKKNQNKFFKDRTYLHLEFPELNPLKITRDETFIFFEDDDAAAEGAENGGGGGGSDNLYQDKDDLEKQEKEREKKMANLLSKNVDIKELKNRWVKDIQELTNDESKKLTVLEIGCGTGATVYPLLKLNPEKYFYVFDFSPHAVNLVKSNSLYNEAKLNAFVCDIATEQIPTSIVKDNSIDMMLMIFVLSAISRDKMHAVANSLFKSLKPGGVLYIRDYGLYDMTQLRFISKKGKKIDENFYLRADGTRTYFFTTQVLSEIFEAAGFKTLVSKYDTRELRNRKRMISMYRVWVRGKFMKPLDNENTENNSKILSIYNDPINNNNNNNNNNNNNNNNTTTTTSTTTTN.

The disordered stretch occupies residues 1-21; the sequence is MNNKTSNGDITNDEPTVGSKR. Residues 146 to 180 are a coiled coil; the sequence is SDNLYQDKDDLEKQEKEREKKMANLLSKNVDIKEL. The interval 408–437 is disordered; sequence DPINNNNNNNNNNNNNNNNTTTTTSTTTTN. Low complexity predominate over residues 411–437; that stretch reads NNNNNNNNNNNNNNNNTTTTTSTTTTN.

Belongs to the methyltransferase superfamily. METL family.

In terms of biological role, probable methyltransferase. This Dictyostelium discoideum (Social amoeba) protein is O-methyltransferase 3 (omt3).